The chain runs to 206 residues: Sec-independent protein translocase protein TatB (206 aa).

The helical transmembrane segment at 1-21 threads the bilayer; sequence MFDIGWTELLVIAVVLIVVVG. A disordered region spans residues 104-206; the sequence is ENKTEVPSAA…VQTKKKKDEA (103 aa). Over residues 110–124 the composition is skewed to low complexity; sequence PSAAMSAPTPSMSLP. The segment covering 125–138 has biased composition (pro residues); that stretch reads ETPPVVPTPAPAPE. Composition is skewed to low complexity over residues 139–151 and 187–196; these read PAAV…AAKP and ARKPAAPKTP.

The protein belongs to the TatB family. In terms of assembly, the Tat system comprises two distinct complexes: a TatABC complex, containing multiple copies of TatA, TatB and TatC subunits, and a separate TatA complex, containing only TatA subunits. Substrates initially bind to the TatABC complex, which probably triggers association of the separate TatA complex to form the active translocon.

It is found in the cell inner membrane. In terms of biological role, part of the twin-arginine translocation (Tat) system that transports large folded proteins containing a characteristic twin-arginine motif in their signal peptide across membranes. Together with TatC, TatB is part of a receptor directly interacting with Tat signal peptides. TatB may form an oligomeric binding site that transiently accommodates folded Tat precursor proteins before their translocation. The polypeptide is Sec-independent protein translocase protein TatB (Rhizobium etli (strain ATCC 51251 / DSM 11541 / JCM 21823 / NBRC 15573 / CFN 42)).